Reading from the N-terminus, the 335-residue chain is 4-hydroxythreonine-4-phosphate dehydrogenase (335 aa).

Position 132 (T132) interacts with substrate. The a divalent metal cation site is built by H163, H208, and H263. Positions 271, 280, and 289 each coordinate substrate.

The protein belongs to the PdxA family. As to quaternary structure, homodimer. The cofactor is Zn(2+). Requires Mg(2+) as cofactor. It depends on Co(2+) as a cofactor.

The protein resides in the cytoplasm. It carries out the reaction 4-(phosphooxy)-L-threonine + NAD(+) = 3-amino-2-oxopropyl phosphate + CO2 + NADH. It functions in the pathway cofactor biosynthesis; pyridoxine 5'-phosphate biosynthesis; pyridoxine 5'-phosphate from D-erythrose 4-phosphate: step 4/5. In terms of biological role, catalyzes the NAD(P)-dependent oxidation of 4-(phosphooxy)-L-threonine (HTP) into 2-amino-3-oxo-4-(phosphooxy)butyric acid which spontaneously decarboxylates to form 3-amino-2-oxopropyl phosphate (AHAP). This is 4-hydroxythreonine-4-phosphate dehydrogenase from Zymomonas mobilis subsp. mobilis (strain ATCC 31821 / ZM4 / CP4).